The chain runs to 729 residues: DNA topoisomerase 3 (729 aa).

A Toprim domain is found at 3 to 136; that stretch reads KKAVLAEKPS…VKRLWISSVT (134 aa). Mg(2+)-binding residues include Glu9 and Asp105. A Topo IA-type catalytic domain is found at 153-590; sequence YETLYAAAAA…EMKEYAKAVV (438 aa). The segment at 187-192 is interaction with DNA; it reads SCGRVQ. The active-site O-(5'-phospho-DNA)-tyrosine intermediate is the Tyr311. A disordered region spans residues 680–708; the sequence is FEQRRKQNKHKNVSKREVQSYMKKQNKQD.

Belongs to the type IA topoisomerase family. Requires Mg(2+) as cofactor.

It catalyses the reaction ATP-independent breakage of single-stranded DNA, followed by passage and rejoining.. Its function is as follows. Releases the supercoiling and torsional tension of DNA, which is introduced during the DNA replication and transcription, by transiently cleaving and rejoining one strand of the DNA duplex. Introduces a single-strand break via transesterification at a target site in duplex DNA. The scissile phosphodiester is attacked by the catalytic tyrosine of the enzyme, resulting in the formation of a DNA-(5'-phosphotyrosyl)-enzyme intermediate and the expulsion of a 3'-OH DNA strand. The free DNA strand then undergoes passage around the unbroken strand, thus removing DNA supercoils. Finally, in the religation step, the DNA 3'-OH attacks the covalent intermediate to expel the active-site tyrosine and restore the DNA phosphodiester backbone. The protein is DNA topoisomerase 3 of Shouchella clausii (strain KSM-K16) (Alkalihalobacillus clausii).